The chain runs to 204 residues: Large ribosomal subunit protein eL15 (204 aa).

This sequence belongs to the eukaryotic ribosomal protein eL15 family. As to quaternary structure, component of the large ribosomal subunit.

It localises to the cytoplasm. Component of the large ribosomal subunit. The ribosome is a large ribonucleoprotein complex responsible for the synthesis of proteins in the cell. This is Large ribosomal subunit protein eL15 (rpl15) from Anguilla japonica (Japanese eel).